The chain runs to 1168 residues: Carboxylic acid reductase (1168 aa).

AMP is bound by residues His290, Ser385, 407–408, Thr412, Asp485, 497–500, Lys506, and Lys606; these read EG and YLDR. The 76-residue stretch at 645-720 folds into the Carrier domain; sequence APVLPTLCRA…ALADHIEAAR (76 aa). Ser679 carries the post-translational modification O-(pantetheine 4'-phosphoryl)serine. NADP(+) contacts are provided by residues 777 to 780, Arg804, Arg814, 844 to 845, 870 to 872, Ser910, Tyr946, and Lys950; these read TGFL, DK, and PAA.

This sequence belongs to the ATP-dependent AMP-binding enzyme family. Carboxylic acid reductase subfamily. Pantetheine 4'-phosphate is required as a cofactor.

It catalyses the reaction a carboxylate + ATP + NADPH + H(+) = an aldehyde + AMP + diphosphate + NADP(+). The enzyme catalyses a medium-chain fatty acid + ATP + H(+) = a medium-chain fatty acyl-AMP + diphosphate. It carries out the reaction a long-chain fatty acid + ATP + H(+) = a long-chain fatty acyl-AMP + diphosphate. The catalysed reaction is dodecanoate + ATP + H(+) = dodecanoyl-AMP + diphosphate. It catalyses the reaction hexadecanoate + ATP + H(+) = hexadecanoyl-AMP + diphosphate. Its function is as follows. Catalyzes the ATP- and NADPH-dependent reduction of carboxylic acids to the corresponding aldehydes. In vitro, also catalyzes the activation of medium/long-chain fatty acids as acyl-adenylates (acyl-AMP). The polypeptide is Carboxylic acid reductase (Mycobacterium tuberculosis (strain ATCC 25618 / H37Rv)).